The following is an 847-amino-acid chain: MRVKGIRKNYQHLWRGGTLLLGMLMICSAVEKLWVTVYYGVPVWKEATTTLFCASDAKAYDTEVHNVWATHACVPTDPNPQEIVLENVTENFNMWKNNMVEQMHEDIISLWDQSLKPCVKLTPLCVTLHCTNLKNATNTKSSNWKEMDRGEIKNCSFKVTTSIRNKMQKEYALFYKLDVVPIDNDNTSYKLINCNTSVITQACPKVSFEPIPIHYCAPAGFAILKCNDKKFNGSGPCTNVSTVQCTHGIRPVVSTQLLLNGSLAEEGVVIRSENFTDNAKTIIVQLKESVEINCTRPNNNTRKSITIGPGRAFYATGDIIGDIRQAHCNISGEKWNNTLKQIVTKLQAQFGNKTIVFKQSSGGDPEIVMHSFNCGGEFFYCNSTQLFNSTWNNTIGPNNTNGTITLPCRIKQIINRWQEVGKAMYAPPIRGQIRCSSNITGLLLTRDGGKEISNTTEIFRPGGGDMRDNWRSELYKYKVVKIEPLGVAPTKAKRRVVQREKRAVTLGAMFLGFLGAAGSTMGARSLTLTVQARQLLSGIVQQQNNLLRAIEAQQHLLQLTVWGIKQLQARVLAVERYLKDQQLLGIWGCSGKLICTTAVPWNASWSNKSLDQIWNNMTWMEWEREIDNYTNLIYTLIEESQNQQEKNEQELLELDKWASLWNWFDISKWLWYIKIFIMIVGGLVGLRIVFTVLSIVNRVRQGYSPLSFQTRFPAPRGPDRPEGIEEEGGERDRDRSSPLVHGLLALIWDDLRSLCLFSYHRLRDLILIAARIVELLGRRGWEALKYWGNLLQYWIQELKNSAVSLFDAIAIAVAEGTDRIIEVAQRIGRAFLHIPRRIRQGFERALL.

The N-terminal stretch at 1–31 (MRVKGIRKNYQHLWRGGTLLLGMLMICSAVE) is a signal peptide. Residues 32 to 675 (KLWVTVYYGV…ISKWLWYIKI (644 aa)) lie on the Extracellular side of the membrane. Cysteines 53 and 73 form a disulfide. Asn87, Asn135, Asn154, Asn186, Asn195, Asn232, Asn239, Asn260, Asn274, Asn293, Asn299, Asn329, Asn336, and Asn352 each carry an N-linked (GlcNAc...) asparagine; by host glycan. 5 disulfides stabilise this stretch: Cys118–Cys203, Cys125–Cys194, Cys130–Cys155, Cys216–Cys245, and Cys226–Cys237. Positions 130–154 (CTNLKNATNTKSSNWKEMDRGEIKN) are V1. The segment at 155–194 (CSFKVTTSIRNKMQKEYALFYKLDVVPIDNDNTSYKLINC) is V2. The V3 stretch occupies residues 294 to 327 (CTRPNNNTRKSITIGPGRAFYATGDIIGDIRQAH). A disulfide bond links Cys294 and Cys328. The interval 360-370 (SSGGDPEIVMH) is CD4-binding loop. 2 disulfide bridges follow: Cys374/Cys435 and Cys381/Cys408. The segment at 381 to 408 (CNSTQLFNSTWNNTIGPNNTNGTITLPC) is V4. Residues Asn382, Asn388, Asn392, Asn398, Asn401, Asn438, and Asn454 are each glycosylated (N-linked (GlcNAc...) asparagine; by host). V5 regions lie at residues 451–462 (EISNTTEIFRPG) and 453–462 (SNTTEIFRPG). A fusion peptide region spans residues 503 to 523 (AVTLGAMFLGFLGAAGSTMGA). Residues 565–583 (KQLQARVLAVERYLKDQQL) are immunosuppression. Residues Cys589 and Cys595 are joined by a disulfide bond. N-linked (GlcNAc...) asparagine; by host glycans are attached at residues Asn602, Asn607, Asn616, and Asn628. Residues 624–658 (REIDNYTNLIYTLIEESQNQQEKNEQELLELDKWA) are a coiled coil. The interval 653–674 (ELDKWASLWNWFDISKWLWYIK) is MPER; binding to GalCer. The chain crosses the membrane as a helical span at residues 676–696 (FIMIVGGLVGLRIVFTVLSIV). The Cytoplasmic portion of the chain corresponds to 697–847 (NRVRQGYSPL…IRQGFERALL (151 aa)). The YXXL motif; contains endocytosis signal signature appears at 703 to 706 (YSPL). A disordered region spans residues 710–736 (TRFPAPRGPDRPEGIEEEGGERDRDRS). A lipid anchor (S-palmitoyl cysteine; by host) is attached at Cys755. The Di-leucine internalization motif signature appears at 846–847 (LL).

The protein belongs to the HIV-1 env protein family. The mature envelope protein (Env) consists of a homotrimer of non-covalently associated gp120-gp41 heterodimers. The resulting complex protrudes from the virus surface as a spike. There seems to be as few as 10 spikes on the average virion. Interacts with host CD4, CCR5 and CXCR4. Gp120 also interacts with the C-type lectins CD209/DC-SIGN and CLEC4M/DC-SIGNR (collectively referred to as DC-SIGN(R)). Gp120 and gp41 interact with GalCer. Gp120 interacts with host ITGA4/ITGB7 complex; on CD4+ T-cells, this interaction results in rapid activation of integrin ITGAL/LFA-1, which facilitates efficient cell-to-cell spreading of HIV-1. Gp120 interacts with cell-associated heparan sulfate; this interaction increases virus infectivity on permissive cells and may be involved in infection of CD4- cells. As to quaternary structure, the mature envelope protein (Env) consists of a homotrimer of non-covalently associated gp120-gp41 heterodimers. The resulting complex protrudes from the virus surface as a spike. There seems to be as few as 10 spikes on the average virion. Highly glycosylated by host. The high number of glycan on the protein is reffered to as 'glycan shield' because it contributes to hide protein sequence from adaptive immune system. Post-translationally, palmitoylation of the transmembrane protein and of Env polyprotein (prior to its proteolytic cleavage) is essential for their association with host cell membrane lipid rafts. Palmitoylation is therefore required for envelope trafficking to classical lipid rafts, but not for viral replication. In terms of processing, specific enzymatic cleavages in vivo yield mature proteins. Envelope glycoproteins are synthesized as an inactive precursor that is heavily N-glycosylated and processed likely by host cell furin in the Golgi to yield the mature SU and TM proteins. The cleavage site between SU and TM requires the minimal sequence [KR]-X-[KR]-R. About 2 of the 9 disulfide bonds of gp41 are reduced by P4HB/PDI, following binding to CD4 receptor.

The protein localises to the virion membrane. It localises to the host cell membrane. Its subcellular location is the host endosome membrane. Functionally, oligomerizes in the host endoplasmic reticulum into predominantly trimers. In a second time, gp160 transits in the host Golgi, where glycosylation is completed. The precursor is then proteolytically cleaved in the trans-Golgi and thereby activated by cellular furin or furin-like proteases to produce gp120 and gp41. In terms of biological role, attaches the virus to the host lymphoid cell by binding to the primary receptor CD4. This interaction induces a structural rearrangement creating a high affinity binding site for a chemokine coreceptor like CXCR4 and/or CCR5. Acts as a ligand for CD209/DC-SIGN and CLEC4M/DC-SIGNR, which are respectively found on dendritic cells (DCs), and on endothelial cells of liver sinusoids and lymph node sinuses. These interactions allow capture of viral particles at mucosal surfaces by these cells and subsequent transmission to permissive cells. HIV subverts the migration properties of dendritic cells to gain access to CD4+ T-cells in lymph nodes. Virus transmission to permissive T-cells occurs either in trans (without DCs infection, through viral capture and transmission), or in cis (following DCs productive infection, through the usual CD4-gp120 interaction), thereby inducing a robust infection. In trans infection, bound virions remain infectious over days and it is proposed that they are not degraded, but protected in non-lysosomal acidic organelles within the DCs close to the cell membrane thus contributing to the viral infectious potential during DCs' migration from the periphery to the lymphoid tissues. On arrival at lymphoid tissues, intact virions recycle back to DCs' cell surface allowing virus transmission to CD4+ T-cells. Acts as a class I viral fusion protein. Under the current model, the protein has at least 3 conformational states: pre-fusion native state, pre-hairpin intermediate state, and post-fusion hairpin state. During fusion of viral and target intracellular membranes, the coiled coil regions (heptad repeats) assume a trimer-of-hairpins structure, positioning the fusion peptide in close proximity to the C-terminal region of the ectodomain. The formation of this structure appears to drive apposition and subsequent fusion of viral and target cell membranes. Complete fusion occurs in host cell endosomes and is dynamin-dependent, however some lipid transfer might occur at the plasma membrane. The virus undergoes clathrin-dependent internalization long before endosomal fusion, thus minimizing the surface exposure of conserved viral epitopes during fusion and reducing the efficacy of inhibitors targeting these epitopes. Membranes fusion leads to delivery of the nucleocapsid into the cytoplasm. In Human immunodeficiency virus type 1 group M subtype B (isolate SF162) (HIV-1), this protein is Envelope glycoprotein gp160.